A 309-amino-acid chain; its full sequence is MEEKSFAKELDQWIEQLNECRQLSESQVRSLCEKAKEILTKESNVQEVRCPVTVCGDVHGQFHDLMELFRIGGKSPDTNYLFMGDYVDRGYYSVETVTLLVALKVRYPERITILRGNHESRQITQVYGFYDECLRKYGNANVWKYFTDLFDYLPLTALVDGQIFCLHGGLSPSIDTLDHIRALDRLQEVPHEGPMCDLLWSDPDDRGGWGISPRGAGYTFGQDISETFNHANGLTLVSRAHQLVMEGYNWCHDRNVVTIFSAPNYCYRCGNQAAIMELDDTLKYSFLQFDPAPRRGEPHVTRRTPDYFL.

Mn(2+) contacts are provided by aspartate 57, histidine 59, aspartate 85, and asparagine 117. Zn(2+)-binding residues include aspartate 57, histidine 59, and aspartate 85. Fe(3+) contacts are provided by aspartate 85 and asparagine 117. Histidine 118 functions as the Proton donor in the catalytic mechanism. The Mn(2+) site is built by histidine 167 and histidine 241. Fe(3+) is bound by residues histidine 167 and histidine 241. Position 307 is a phosphotyrosine (tyrosine 307). The residue at position 309 (leucine 309) is a Leucine methyl ester.

This sequence belongs to the PPP phosphatase family. PP-1 subfamily. PP2A consists of a common heterodimeric core enzyme, composed of PPP2CA, a 36 kDa catalytic subunit (subunit C), and PPP2R1A, a 65 kDa constant regulatory subunit (PR65 or subunit A), that associates with a variety of regulatory subunits. Proteins that associate with the core dimer include three families of regulatory subunits B (the R2/B/PR55/B55, R3/B''/PR72/PR130/PR59 and R5/B'/B56 families), the 48 kDa variable regulatory subunit, viral proteins, and cell signaling molecules. May indirectly interact with SGOL1, most probably through regulatory B56 subunits. Phosphatase component of the Integrator-PP2A (INTAC) complex, composed of the Integrator core complex and protein phosphatase 2A subunits PPP2CA and PPP2R1A. The cofactor is Mn(2+). Fe(3+) serves as cofactor. Requires Zn(2+) as cofactor. Post-translationally, reversibly methyl esterified on Leu-309 by leucine carboxyl methyltransferase 1 (LCMT1) and protein phosphatase methylesterase 1 (PPME1). Carboxyl methylation influences the affinity of the catalytic subunit for the different regulatory subunits, thereby modulating the PP2A holoenzyme's substrate specificity, enzyme activity and cellular localization. Phosphorylation of either threonine (by autophosphorylation-activated protein kinase) or tyrosine results in inactivation of the phosphatase. Auto-dephosphorylation has been suggested as a mechanism for reactivation.

The protein localises to the cytoplasm. The protein resides in the nucleus. Its subcellular location is the chromosome. It is found in the centromere. It localises to the cytoskeleton. The protein localises to the spindle pole. The catalysed reaction is O-phospho-L-seryl-[protein] + H2O = L-seryl-[protein] + phosphate. It catalyses the reaction O-phospho-L-threonyl-[protein] + H2O = L-threonyl-[protein] + phosphate. Inhibited by the interaction between PPP2R2A and ARPP19; this inhibition is enhanced when ARPP19 is phosphorylated. Inhibited by the interaction between PPP2R2A and PABIR1/FAM122A. PP2A is the major phosphatase for microtubule-associated proteins (MAPs). PP2A can modulate the activity of phosphorylase B kinase casein kinase 2, mitogen-stimulated S6 kinase, and MAP-2 kinase. Key mediator of a quality checkpoint during transcription elongation as part of the Integrator-PP2A (INTAC) complex. The INTAC complex drives premature transcription termination of transcripts that are unfavorably configured for transcriptional elongation: within the INTAC complex, PPP2CA catalyzes dephosphorylation of the C-terminal domain (CTD) of Pol II subunit POLR2A/RPB1 and SUPT5H/SPT5, thereby preventing transcriptional elongation. The polypeptide is Serine/threonine-protein phosphatase 2A catalytic subunit alpha isoform (PPP2CA) (Gallus gallus (Chicken)).